The primary structure comprises 281 residues: Pseudouridine-5'-phosphate glycosidase (281 aa).

E9 acts as the Proton donor in catalysis. The substrate site is built by K69 and V89. D118 contributes to the Mn(2+) binding site. 120 to 122 (SAD) is a binding site for substrate. Catalysis depends on K139, which acts as the Nucleophile.

It belongs to the pseudouridine-5'-phosphate glycosidase family. Homotrimer. Mn(2+) serves as cofactor.

It catalyses the reaction D-ribose 5-phosphate + uracil = psi-UMP + H2O. Its function is as follows. Catalyzes the reversible cleavage of pseudouridine 5'-phosphate (PsiMP) to ribose 5-phosphate and uracil. Functions biologically in the cleavage direction, as part of a pseudouridine degradation pathway. In Thermus thermophilus (strain ATCC BAA-163 / DSM 7039 / HB27), this protein is Pseudouridine-5'-phosphate glycosidase.